We begin with the raw amino-acid sequence, 348 residues long: Photosystem II protein D1 (348 aa).

3 consecutive transmembrane segments (helical) span residues Tyr33 to Val50, His122 to Phe137, and Trp146 to Ala160. Residue His122 participates in chlorophyll a binding. Trp130 is a pheophytin a binding site. [CaMn4O5] cluster contacts are provided by Asp174 and Glu193. Residues Phe201–Leu222 traverse the membrane as a helical segment. A chlorophyll a-binding site is contributed by His202. A quinone contacts are provided by residues His219 and Ser268–Phe269. Fe cation is bound at residue His219. Fe cation is bound at residue His276. The helical transmembrane segment at Phe278 to Leu292 threads the bilayer. [CaMn4O5] cluster contacts are provided by His336, Glu337, Asp346, and Ala348.

It belongs to the reaction center PufL/M/PsbA/D family. In terms of assembly, PSII is composed of 1 copy each of membrane proteins PsbA, PsbB, PsbC, PsbD, PsbE, PsbF, PsbH, PsbI, PsbJ, PsbK, PsbL, PsbM, PsbT, PsbX, PsbY, PsbZ, Psb30/Ycf12, at least 3 peripheral proteins of the oxygen-evolving complex and a large number of cofactors. It forms dimeric complexes. It depends on The D1/D2 heterodimer binds P680, chlorophylls that are the primary electron donor of PSII, and subsequent electron acceptors. It shares a non-heme iron and each subunit binds pheophytin, quinone, additional chlorophylls, carotenoids and lipids. D1 provides most of the ligands for the Mn4-Ca-O5 cluster of the oxygen-evolving complex (OEC). There is also a Cl(-1) ion associated with D1 and D2, which is required for oxygen evolution. The PSII complex binds additional chlorophylls, carotenoids and specific lipids. as a cofactor. In terms of processing, tyr-165 forms a radical intermediate that is referred to as redox-active TyrZ, YZ or Y-Z.

It localises to the plastid. Its subcellular location is the chloroplast thylakoid membrane. The catalysed reaction is 2 a plastoquinone + 4 hnu + 2 H2O = 2 a plastoquinol + O2. In terms of biological role, photosystem II (PSII) is a light-driven water:plastoquinone oxidoreductase that uses light energy to abstract electrons from H(2)O, generating O(2) and a proton gradient subsequently used for ATP formation. It consists of a core antenna complex that captures photons, and an electron transfer chain that converts photonic excitation into a charge separation. The D1/D2 (PsbA/PsbD) reaction center heterodimer binds P680, the primary electron donor of PSII as well as several subsequent electron acceptors. The sequence is that of Photosystem II protein D1 from Heterocapsa rotundata (Dinoflagellate).